A 197-amino-acid polypeptide reads, in one-letter code: Dephospho-CoA kinase (197 aa).

Residues 3–197 (VLGLTGSIGL…IDELRGQRGS (195 aa)) enclose the DPCK domain. Position 11 to 16 (11 to 16 (GLGKST)) interacts with ATP.

It belongs to the CoaE family.

The protein localises to the cytoplasm. The enzyme catalyses 3'-dephospho-CoA + ATP = ADP + CoA + H(+). The protein operates within cofactor biosynthesis; coenzyme A biosynthesis; CoA from (R)-pantothenate: step 5/5. In terms of biological role, catalyzes the phosphorylation of the 3'-hydroxyl group of dephosphocoenzyme A to form coenzyme A. The protein is Dephospho-CoA kinase of Mesorhizobium japonicum (strain LMG 29417 / CECT 9101 / MAFF 303099) (Mesorhizobium loti (strain MAFF 303099)).